A 431-amino-acid polypeptide reads, in one-letter code: O-methyltransferase xanE (431 aa).

An S-adenosyl-L-methionine-binding site is contributed by D283. The active-site Proton acceptor is H330.

Belongs to the class I-like SAM-binding methyltransferase superfamily. Cation-independent O-methyltransferase family.

The protein operates within secondary metabolite biosynthesis. Its function is as follows. O-methyltransferase; part of the gene cluster that mediates the biosynthesis of the isocyanide xanthocillin and its derivatives. The first step of the pathway consists in the conversion of tyrosine into a vinyl-isonitrile intermediate by the isocyanide synthase xanB. Subsequent oxidative dimerization of this intermediate to form xanthocillin may involve the cytochrome P450 monooxygenase xanG, whose expression is coregulated with that of XanB. Xanthocillin can be further modified by the isonitrile hydratase-like protein xanA which introduces N-formyl groups and the methyltransferase xanE which introduces methyl groups, leading to the production of several derivatives including fumiformamide. Finally, fumiformamide can be subject to both oxidative and reductive cyclization to yield melanocins E and F, respectively. This Aspergillus fumigatus (strain ATCC MYA-4609 / CBS 101355 / FGSC A1100 / Af293) (Neosartorya fumigata) protein is O-methyltransferase xanE.